The primary structure comprises 500 residues: Potassium/proton antiporter CemA (500 aa).

Residues 129–149 (LFLTTIKTIFILFFVPFLVNF) form a helical membrane-spanning segment. The tract at residues 204-354 (HQTHRDSKPL…GSLDSIKNKD (151 aa)) is insert. The next 3 helical transmembrane spans lie at 378–398 (ITNF…LITL), 425–445 (ILLI…ELFF), and 461–481 (IFLL…YLIF).

The protein belongs to the CemA family.

Its subcellular location is the plastid. It is found in the chloroplast inner membrane. It carries out the reaction K(+)(in) + H(+)(out) = K(+)(out) + H(+)(in). Its function is as follows. Contributes to K(+)/H(+) antiport activity by supporting proton efflux to control proton extrusion and homeostasis in chloroplasts in a light-dependent manner to modulate photosynthesis. Prevents excessive induction of non-photochemical quenching (NPQ) under continuous-light conditions. Indirectly promotes efficient inorganic carbon uptake into chloroplasts. This Chlamydomonas reinhardtii (Chlamydomonas smithii) protein is Potassium/proton antiporter CemA.